A 399-amino-acid polypeptide reads, in one-letter code: Elongation factor Tu (399 aa).

In terms of domain architecture, tr-type G spans 10–204 (KPHVNIGTIG…AVDEAIPEPE (195 aa)). Positions 19–26 (GHVDHGKT) are G1. 19-26 (GHVDHGKT) is a binding site for GTP. Threonine 26 contacts Mg(2+). The interval 60-64 (GITIN) is G2. A G3 region spans residues 81–84 (DCPG). Residues 81–85 (DCPGH) and 136–139 (NKCD) contribute to the GTP site. The interval 136 to 139 (NKCD) is G4. Positions 174–176 (SGL) are G5.

Belongs to the TRAFAC class translation factor GTPase superfamily. Classic translation factor GTPase family. EF-Tu/EF-1A subfamily. Monomer.

It is found in the cytoplasm. It carries out the reaction GTP + H2O = GDP + phosphate + H(+). Functionally, GTP hydrolase that promotes the GTP-dependent binding of aminoacyl-tRNA to the A-site of ribosomes during protein biosynthesis. This is Elongation factor Tu from Parasynechococcus marenigrum (strain WH8102).